The primary structure comprises 83 residues: Protein YciN (83 aa).

The polypeptide is Protein YciN (yciN) (Escherichia coli O157:H7).